The sequence spans 859 residues: Transforming growth factor-beta receptor-associated protein 1 (859 aa).

Residues 24-297 enclose the CNH domain; sequence RGLLECVECC…HILQDFEGRV (274 aa). The CHCR repeat unit spans residues 563–727; sequence KRPLDEQQSG…LLAVYLGPGP (165 aa).

This sequence belongs to the TRAP1 family. Interacts with TGFBR2 and ACVR2B; in the absence of ligand stimulation. Interacts with TGFBR1, ACVRL1, BMPR1A and ACVR1B; in the absence of ligand stimulation and to a less extent. Interacts with SMAD4; the interaction seems to be mutually exclusive with the interaction of SMAD4 and phosphorylated SMAD2. May interact with ALOX5. Interacts with RAB5C. Interacts with VPS8, VPS11 and VPS16. Component of the putative class C core vacuole/endosome tethering (CORVET) complex; the core of which composed of the class C Vps proteins VPS11, VPS16, VPS18 and VPS33A, is associated with VPS8 and TGFBRAP1.

It localises to the cytoplasm. The protein resides in the early endosome. Functionally, plays a role in the TGF-beta/activin signaling pathway. It associates with inactive heteromeric TGF-beta and activin receptor complexes, mainly through the type II receptor, and is released upon activation of signaling. May recruit SMAD4 to the vicinity of the receptor complex and facilitate its interaction with receptor-regulated Smads, such as SMAD2. Its function is as follows. Plays a role in vesicle-mediated protein trafficking of the endocytic membrane transport pathway. Believed to act as a component of the putative CORVET endosomal tethering complexes which is proposed to be involved in the Rab5-to-Rab7 endosome conversion probably implicating MON1A/B, and via binding SNAREs and SNARE complexes to mediate tethering and docking events during SNARE-mediated membrane fusion. The CORVET complex is proposed to function as a Rab5 effector to mediate early endosome fusion probably in specific endosome subpopulations. Functions predominantly in APPL1-containing endosomes and in degradative but not recycling trafficking of endocytosed cargo. This Bos taurus (Bovine) protein is Transforming growth factor-beta receptor-associated protein 1 (TGFBRAP1).